A 404-amino-acid polypeptide reads, in one-letter code: MNRVYSVSDINNYIKQLVSNDIILSDVSIRGEISNFKHHYTGHMYFTIKDKNSLLKCVMFRSQAVSLRFSPENGMKVIVSGYISVFERDGQYQLYASSMQPDGVGALHIAFEQLKEKLQREGLFDPENKKKIPVLPGSIGVVTSSTGAVIRDIINVTYRRNSKMKLVLYPVAVQGQQAAGQIAEAIKCLNEQNKVDVIIVARGGGSLEELWAFNEEIVARSIYASNIPVISAVGHETDFTICDFVSDMRAPTPSAAAELAVPDMEVLLYKLESYNMRMKSSLAKKVTTLKNQLQKLNARPFFAQPYDRVNQQRQTLDNLTKSMVRENQTIIKDKKSQFGMLAGKLDALSPLKILERGYSLVKNPQGYVVNNVKQINIGDKLEILMNDGLAECDVISVREGKIYE.

This sequence belongs to the XseA family. In terms of assembly, heterooligomer composed of large and small subunits.

Its subcellular location is the cytoplasm. The enzyme catalyses Exonucleolytic cleavage in either 5'- to 3'- or 3'- to 5'-direction to yield nucleoside 5'-phosphates.. Its function is as follows. Bidirectionally degrades single-stranded DNA into large acid-insoluble oligonucleotides, which are then degraded further into small acid-soluble oligonucleotides. This is Exodeoxyribonuclease 7 large subunit from Ruminiclostridium cellulolyticum (strain ATCC 35319 / DSM 5812 / JCM 6584 / H10) (Clostridium cellulolyticum).